The chain runs to 384 residues: Transcription factor TGA3 (384 aa).

Disordered regions lie at residues 36-70 and 76-95; these read KSDI…NNRV and YNNS…EDRI. A compositionally biased stretch (low complexity) spans 39–55; sequence INNITSNQNNNQSSSTT. Basic and acidic residues predominate over residues 58–68; it reads VDARPEADDNN. The span at 76–88 shows a compositional bias: polar residues; the sequence is YNNSLEAEPSSNN. The bZIP domain maps to 96–138; sequence NDKMKRRLAQNREAARKSRLRKKAHVQQLEESRLKLSQLEQEL. Residues 98-118 form a basic motif region; that stretch reads KMKRRLAQNREAARKSRLRKK. The short motif at 99–106 is the Nuclear localization signal element; that stretch reads MKRRLAQN. Residues 117–144 are a coiled coil; sequence KKAHVQQLEESRLKLSQLEQELVRARQQ. Positions 124-138 are leucine-zipper; it reads LEESRLKLSQLEQEL. The 213-residue stretch at 167–379 folds into the DOG1 domain; sequence IAAFEMEYTH…RALSSLWAAR (213 aa). Positions 219, 236, and 249 each coordinate hexadecanoate. A coiled-coil region spans residues 267–296; the sequence is DQQLLEVRNLQQSSQQAEEALSQGLDKLQQ.

It belongs to the bZIP family. As to quaternary structure, binds DNA as a dimer. Interacts with NPR3, NPR4 and sumoylated NPR1. Interacts with GRXC7/ROXY1. Expressed in the whole plant.

It localises to the nucleus. In terms of biological role, transcriptional activator that binds specifically to the DNA sequence 5'-TGACG-3'. Recognizes ocs elements like the as-1 motif of the cauliflower mosaic virus 35S promoter. Binding to the as-1-like cis elements mediate auxin- and salicylic acid-inducible transcription. Required to induce the systemic acquired resistance (SAR) via the regulation of pathogenesis-related genes expression. Binding to the as-1 element of PR-1 promoter is salicylic acid-inducible and mediated by sumoylated NPR1. Could also bind to the Hex-motif (5'-TGACGTGG-3') another cis-acting element found in plant histone promoters. This chain is Transcription factor TGA3, found in Arabidopsis thaliana (Mouse-ear cress).